A 259-amino-acid chain; its full sequence is Flagellar L-ring protein 1 (259 aa).

An N-terminal signal peptide occupies residues 1–15 (MKRICLLALITTMSG). C16 carries N-palmitoyl cysteine lipidation. Residue C16 is the site of S-diacylglycerol cysteine attachment. Positions 38–63 (EGDKSKDESSGIVDTLRGRNDPVAGD) are disordered.

This sequence belongs to the FlgH family. In terms of assembly, the basal body constitutes a major portion of the flagellar organelle and consists of four rings (L,P,S, and M) mounted on a central rod.

The protein localises to the cell outer membrane. It localises to the bacterial flagellum basal body. Assembles around the rod to form the L-ring and probably protects the motor/basal body from shearing forces during rotation. This chain is Flagellar L-ring protein 1 (flgH1), found in Vibrio parahaemolyticus serotype O3:K6 (strain RIMD 2210633).